Consider the following 414-residue polypeptide: Isocitrate dehydrogenase [NADP] cytoplasmic (414 aa).

S2 carries the post-translational modification N-acetylserine. Y42 carries the post-translational modification Phosphotyrosine. 75-77 is an NADP(+) binding site; sequence TIT. Substrate is bound at residue T77. At K81 the chain carries N6-acetyllysine. R82 is a binding site for NADP(+). Residues 94–100 and R109 each bind substrate; that span reads SPNGTIR. An N6-succinyllysine modification is found at K126. R132 and K212 together coordinate substrate. Residues K224, K233, and K243 each carry the N6-acetyllysine modification. D252 is a binding site for Mn(2+). K260 lines the NADP(+) pocket. The Mn(2+) site is built by D275 and D279. 310–315 is a binding site for NADP(+); it reads GTVTRH. N6-acetyllysine is present on K321. N328 contacts NADP(+). S389 is modified (phosphoserine). K400 is subject to N6-succinyllysine.

This sequence belongs to the isocitrate and isopropylmalate dehydrogenases family. As to quaternary structure, homodimer. The cofactor is Mg(2+). Mn(2+) is required as a cofactor. Acetylation at Lys-374 dramatically reduces catalytic activity.

The protein localises to the cytoplasm. It localises to the cytosol. It carries out the reaction D-threo-isocitrate + NADP(+) = 2-oxoglutarate + CO2 + NADPH. Its function is as follows. Catalyzes the NADP(+)-dependent oxidative decarboxylation of isocitrate (D-threo-isocitrate) to 2-ketoglutarate (2-oxoglutarate), which is required by other enzymes such as the phytanoyl-CoA dioxygenase. Plays a critical role in the generation of NADPH, an important cofactor in many biosynthesis pathways. May act as a corneal epithelial crystallin and may be involved in maintaining corneal epithelial transparency. This Microtus ochrogaster (Prairie vole) protein is Isocitrate dehydrogenase [NADP] cytoplasmic (IDH1).